Consider the following 117-residue polypeptide: Galanin-like peptide (117 aa).

The first 23 residues, 1 to 23 (MACSVHLVLFLTILLSLAETPES), serve as a signal peptide directing secretion. The propeptide occupies 86–117 (TMGETFVKANTGDMHILDKNVPKEEATLDSES).

Belongs to the galanin family. In terms of tissue distribution, isoform 2 is found in brain, thymus and skin. Isoform 2 is found in the skin, in pericytes covering microvascular arterioles and venules on their abluminal surfaces. In larger vessels, isoform 2 is expressed in layers of smooth muscle cells. Isoform 2 is not detected in endothelial cells.

It is found in the secreted. Functionally, hypothalamic neuropeptide which binds to the G-protein-coupled galanin receptors (GALR1, GALR2 and GALR3). Involved in a large number of putative physiological functions in CNS homeostatic processes, including the regulation of gonadotropin-releasing hormone secretion. In terms of biological role, exhibits antimicrobial activity against Gram-negative bacterias, inducing bacterial membrane blebbing. Exhibits potent and dose-dependent vasoconstrictor and anti-edema activity in the cutaneous microvasculature, a physiologic effects which does not appear to be mediated via GALR1 or GALR2. The chain is Galanin-like peptide (Galp) from Mus musculus (Mouse).